The primary structure comprises 843 residues: Receptor-like serine/threonine-protein kinase SD1-7 (843 aa).

The signal sequence occupies residues 1 to 31 (MRSVPNYHHSFFIFLILILFLAFSVSPNTLS). Residues 32–151 (ATESLTISSN…NNRLLWQSFD (120 aa)) enclose the Bulb-type lectin domain. Residues 32 to 435 (ATESLTISSN…LEDKRIKNEK (404 aa)) lie on the Extracellular side of the membrane. N-linked (GlcNAc...) asparagine glycans are attached at residues asparagine 41, asparagine 92, asparagine 116, asparagine 236, and asparagine 251. Residues 286–322 (PKDLCDNYKVCGNFGYCDSNSLPNCYCIKGFKPVNEQ) form the EGF-like; atypical domain. 4 disulfide bridges follow: cysteine 290/cysteine 302, cysteine 296/cysteine 310, cysteine 372/cysteine 397, and cysteine 376/cysteine 382. Residues 341-422 (CDGRDGFTRL…GGQDLYVRLA (82 aa)) enclose the PAN domain. N-linked (GlcNAc...) asparagine glycosylation is present at asparagine 381. Residues 436–456 (IIGSSIGVSILLLLSFVIFHF) form a helical membrane-spanning segment. Topologically, residues 457–843 (WKRKQKRSIT…QITLSVIDAR (387 aa)) are cytoplasmic. The Protein kinase domain maps to 519 to 809 (FSNDNKLGQG…AIPQPKRPGF (291 aa)). ATP-binding positions include 525–533 (LGQGGFGIV) and lysine 547. Serine 553 is modified (phosphoserine). Residues 608–625 (TRSSNLNWQKRFDIINGI) form a caM-binding region. Catalysis depends on aspartate 644, which acts as the Proton acceptor. Serine 648 and serine 661 each carry phosphoserine. Phosphothreonine is present on threonine 678. At serine 820 the chain carries Phosphoserine.

Belongs to the protein kinase superfamily. Ser/Thr protein kinase family. As to quaternary structure, interacts with PUB9, PUB13, PUB14 and PUB38. In terms of processing, autophosphorylated on serine and threonine residues. As to expression, mostly expressed in leaves, and, to a lower extent, in stems and flower buds.

It is found in the cell membrane. It carries out the reaction L-seryl-[protein] + ATP = O-phospho-L-seryl-[protein] + ADP + H(+). The enzyme catalyses L-threonyl-[protein] + ATP = O-phospho-L-threonyl-[protein] + ADP + H(+). In terms of biological role, involved in the regulation of cellular expansion and differentiation. Mediates subcellular relocalization of PUB9 from nucleus to plasma membrane in a protein-phosphorylation-dependent manner. May be involved in the abscisic acid-mediated signaling pathway, at least during germination. The polypeptide is Receptor-like serine/threonine-protein kinase SD1-7 (SD17) (Arabidopsis thaliana (Mouse-ear cress)).